Consider the following 316-residue polypeptide: Golgi to ER traffic protein 2 (316 aa).

Positions Met1–Lys75 are disordered. Residues Met1–Lys167 lie on the Cytoplasmic side of the membrane. The span at Asp7–Gln19 shows a compositional bias: basic and acidic residues. Composition is skewed to polar residues over residues Phe22–Val48 and Pro56–Val65. Residues Leu168–Ile187 form a helical membrane-spanning segment. The Lumenal portion of the chain corresponds to Met188–Asn209. The chain crosses the membrane as a helical span at residues Phe210 to Leu229. Residues Lys230 to Asp276 lie on the Cytoplasmic side of the membrane. Residues Val277–Tyr297 form a helical membrane-spanning segment. At Tyr298–Gln316 the chain is on the lumenal side.

It belongs to the GET2 family. In terms of assembly, component of the Golgi to ER traffic (GET) complex, which is composed of GET1, GET2 and GET3. Within the complex, GET1 and GET2 form a heterotetramer which is stabilized by phosphatidylinositol binding and which binds to the GET3 homodimer.

Its subcellular location is the endoplasmic reticulum membrane. The protein localises to the golgi apparatus membrane. Required for the post-translational delivery of tail-anchored (TA) proteins to the endoplasmic reticulum. Together with GET1, acts as a membrane receptor for soluble GET3, which recognizes and selectively binds the transmembrane domain of TA proteins in the cytosol. The GET complex cooperates with the HDEL receptor ERD2 to mediate the ATP-dependent retrieval of resident ER proteins that contain a C-terminal H-D-E-L retention signal from the Golgi to the ER. The protein is Golgi to ER traffic protein 2 of Kluyveromyces lactis (strain ATCC 8585 / CBS 2359 / DSM 70799 / NBRC 1267 / NRRL Y-1140 / WM37) (Yeast).